A 274-amino-acid chain; its full sequence is Nitrogenase iron protein (274 aa).

8-15 lines the ATP pocket; sequence GKGGIGKS. Cys-94 provides a ligand contact to [4Fe-4S] cluster. Arg-97 is subject to ADP-ribosylarginine; by dinitrogenase reductase ADP-ribosyltransferase. Cys-131 lines the [4Fe-4S] cluster pocket.

It belongs to the NifH/BchL/ChlL family. In terms of assembly, homodimer. It depends on [4Fe-4S] cluster as a cofactor. In terms of processing, the reversible ADP-ribosylation of Arg-97 inactivates the nitrogenase reductase and regulates nitrogenase activity.

It carries out the reaction N2 + 8 reduced [2Fe-2S]-[ferredoxin] + 16 ATP + 16 H2O = H2 + 8 oxidized [2Fe-2S]-[ferredoxin] + 2 NH4(+) + 16 ADP + 16 phosphate + 6 H(+). The key enzymatic reactions in nitrogen fixation are catalyzed by the nitrogenase complex, which has 2 components: the iron protein and the molybdenum-iron protein. This Chlorobium limicola (strain DSM 245 / NBRC 103803 / 6330) protein is Nitrogenase iron protein.